Here is a 233-residue protein sequence, read N- to C-terminus: Endo-1,4-beta-xylanase 1 (233 aa).

A signal peptide spans 1-20 (MVSFTSIVTAVVALAGSALA). N-linked (GlcNAc...) asparagine glycosylation occurs at Asn27. A GH11 domain is found at 40 to 230 (QSTPSSTGRH…SAGNSNINVQ (191 aa)). The active-site Nucleophile is the Glu126. Glu217 functions as the Proton donor in the catalytic mechanism.

This sequence belongs to the glycosyl hydrolase 11 (cellulase G) family.

Its subcellular location is the secreted. The catalysed reaction is Endohydrolysis of (1-&gt;4)-beta-D-xylosidic linkages in xylans.. It participates in glycan degradation; xylan degradation. Functionally, endo-1,4-beta-xylanase involved in the hydrolysis of xylan, a major structural heterogeneous polysaccharide found in plant biomass representing the second most abundant polysaccharide in the biosphere, after cellulose. Accounts for approximately 70 percent of the endoxylanase activity in the culture filtrate. The polypeptide is Endo-1,4-beta-xylanase 1 (XYL1) (Pyricularia grisea (Crabgrass-specific blast fungus)).